The following is a 584-amino-acid chain: AP-1-like transcription factor yap1 (584 aa).

Residues 23–179 (LAALSSNQPP…AFRERKEKHL (157 aa)) form a disordered region. A Bipartite nuclear localization signal motif is present at residues 35 to 42 (QQNDKQRS). Basic and acidic residues predominate over residues 36-48 (QNDKQRSQAKTDP). The segment covering 52–67 (PGNMSSGSFSMSPGFN) has biased composition (low complexity). Positions 68–75 (KTHPGSGG) match the Bipartite nuclear localization signal motif. Acidic residues predominate over residues 79–94 (GDDESPFLDFNPELDF). Composition is skewed to basic and acidic residues over residues 112–144 (SEEH…DKAA) and 170–179 (AFRERKEKHL). The region spanning 154 to 217 (SEPTSKRKAQ…ERLQVELREY (64 aa)) is the bZIP domain. Positions 159–180 (KRKAQNRAAQRAFRERKEKHLK) are basic motif. Residues 182 to 189 (LETKVDEL) are leucine-zipper. Residues 211–332 (QVELREYRKR…PSPKVPSVYN (122 aa)) form a transcription activation 1 region. Disordered stretches follow at residues 267–379 (IFNG…TKLN) and 418–441 (RGKS…TPGP). The interval 284–296 (SSPATSDSQVPGV) is n-CRD. A compositionally biased stretch (polar residues) spans 300-309 (ETLNGSNNRG). The segment covering 336–362 (SASSHDSSNSCSPSSSSDSHQSQMLSS) has biased composition (low complexity). Composition is skewed to polar residues over residues 363–379 (NGTS…TKLN) and 422–437 (ESVS…NYEQ). A transcription activation 2 region spans residues 377–480 (KLNDSVQNHH…SQDFGTFFDD (104 aa)). Intrachain disulfides connect cysteine 531–cysteine 555, cysteine 531–cysteine 564, and cysteine 555–cysteine 564. The segment at 531-564 (CTKIWDRLQSMEKFRNGEIDVDNLCSELRTKARC) is c-CRD. Residues 549 to 556 (IDVDNLCS) carry the Nuclear export signal motif.

This sequence belongs to the bZIP family. YAP subfamily. Depending on the oxidative stress inducing agent, yap1 can undergo two distinct conformational changes, both involving disulfide bond formation, and both masking the nuclear export signal, thus abolishing nuclear export.

Its subcellular location is the nucleus. The protein localises to the cytoplasm. Functionally, transcription activator involved in oxidative stress response and redox homeostasis. Regulates the transcription of genes encoding antioxidant enzymes and components of the cellular thiol-reducing pathways. May be involved in antifungal resistance to voriconazole. This is AP-1-like transcription factor yap1 from Aspergillus flavus (strain ATCC 200026 / FGSC A1120 / IAM 13836 / NRRL 3357 / JCM 12722 / SRRC 167).